The primary structure comprises 354 residues: Uroporphyrinogen decarboxylase (354 aa).

Substrate is bound by residues 27 to 31 (RQAGR), D77, Y154, S209, and H327.

The protein belongs to the uroporphyrinogen decarboxylase family. As to quaternary structure, homodimer.

It localises to the cytoplasm. The catalysed reaction is uroporphyrinogen III + 4 H(+) = coproporphyrinogen III + 4 CO2. Its pathway is porphyrin-containing compound metabolism; protoporphyrin-IX biosynthesis; coproporphyrinogen-III from 5-aminolevulinate: step 4/4. Catalyzes the decarboxylation of four acetate groups of uroporphyrinogen-III to yield coproporphyrinogen-III. The chain is Uroporphyrinogen decarboxylase from Shewanella baltica (strain OS223).